A 328-amino-acid chain; its full sequence is H-2 class I histocompatibility antigen, K-Q alpha chain (328 aa).

Residues 1-71 form an alpha-1 region; it reads PRFISVGYVD…LLRYYNQSAG (71 aa). The Extracellular portion of the chain corresponds to 1-265; sequence PRFISVGYVD…EPPPSAVSNT (265 aa). A glycan (N-linked (GlcNAc...) asparagine) is linked at N67. Residues 72-163 form an alpha-2 region; sequence GSHTIQRMYG…KNGNATLLRT (92 aa). The cysteines at positions 82 and 145 are disulfide-linked. A glycan (N-linked (GlcNAc...) asparagine) is linked at N157. The alpha-3 stretch occupies residues 164 to 255; it reads DSPKAHVTHH…GLPKPLTLRW (92 aa). One can recognise an Ig-like C1-type domain in the interval 166–252; that stretch reads PKAHVTHHSR…YHQGLPKPLT (87 aa). Residues C184 and C240 are joined by a disulfide bond. The interval 256–265 is connecting peptide; it reads EPPPSAVSNT. A helical membrane pass occupies residues 266 to 289; that stretch reads VIIAVLVVLGAAIVTGAVVAFVMM. Topologically, residues 290–328 are cytoplasmic; it reads RRRNTGGKGGDYALAPGSQTSDLSLPDCKVMVHDPHSLA. Phosphoserine occurs at positions 310 and 313.

Belongs to the MHC class I family. Heterodimer of an alpha chain and a beta chain (beta-2-microglobulin).

It is found in the membrane. Involved in the presentation of foreign antigens to the immune system. The chain is H-2 class I histocompatibility antigen, K-Q alpha chain (H2-K1) from Mus musculus (Mouse).